Here is a 360-residue protein sequence, read N- to C-terminus: Phospho-N-acetylmuramoyl-pentapeptide-transferase (360 aa).

10 helical membrane passes run 25-45 (RGIL…PWMI), 73-93 (TMGG…WADL), 97-117 (YVWV…VDDY), 135-155 (FWQS…APSA), 170-190 (IPLG…SSNA), 199-219 (GLAI…CYLS), 236-256 (AGEL…FLWF), 263-283 (VFMG…MAVI), 288-308 (IVLF…VIQV), and 338-358 (VIVR…ATLK).

It belongs to the glycosyltransferase 4 family. MraY subfamily. Mg(2+) serves as cofactor.

Its subcellular location is the cell inner membrane. It catalyses the reaction UDP-N-acetyl-alpha-D-muramoyl-L-alanyl-gamma-D-glutamyl-meso-2,6-diaminopimeloyl-D-alanyl-D-alanine + di-trans,octa-cis-undecaprenyl phosphate = di-trans,octa-cis-undecaprenyl diphospho-N-acetyl-alpha-D-muramoyl-L-alanyl-D-glutamyl-meso-2,6-diaminopimeloyl-D-alanyl-D-alanine + UMP. It participates in cell wall biogenesis; peptidoglycan biosynthesis. In terms of biological role, catalyzes the initial step of the lipid cycle reactions in the biosynthesis of the cell wall peptidoglycan: transfers peptidoglycan precursor phospho-MurNAc-pentapeptide from UDP-MurNAc-pentapeptide onto the lipid carrier undecaprenyl phosphate, yielding undecaprenyl-pyrophosphoryl-MurNAc-pentapeptide, known as lipid I. In Pseudomonas savastanoi pv. phaseolicola (strain 1448A / Race 6) (Pseudomonas syringae pv. phaseolicola (strain 1448A / Race 6)), this protein is Phospho-N-acetylmuramoyl-pentapeptide-transferase.